Reading from the N-terminus, the 839-residue chain is Probable alpha-glucuronidase A (839 aa).

The first 18 residues, 1-18 (MRWSFLTVLLWLVSLTGA), serve as a signal peptide directing secretion. Residues asparagine 49, asparagine 101, asparagine 148, asparagine 221, asparagine 278, asparagine 309, asparagine 342, asparagine 464, asparagine 526, asparagine 575, asparagine 681, and asparagine 731 are each glycosylated (N-linked (GlcNAc...) asparagine).

Belongs to the glycosyl hydrolase 67 family.

Its subcellular location is the secreted. It carries out the reaction an alpha-D-glucuronoside + H2O = D-glucuronate + an alcohol. In terms of biological role, alpha-glucuronidase involved in the hydrolysis of xylan, a major structural heterogeneous polysaccharide found in plant biomass representing the second most abundant polysaccharide in the biosphere, after cellulose. Releases 4-O-methylglucuronic acid from xylan. In Aspergillus flavus (strain ATCC 200026 / FGSC A1120 / IAM 13836 / NRRL 3357 / JCM 12722 / SRRC 167), this protein is Probable alpha-glucuronidase A (aguA).